The following is a 143-amino-acid chain: Transcriptional regulator MraZ (143 aa).

2 consecutive SpoVT-AbrB domains span residues 5–47 (EYSH…PMAV) and 76–119 (ALEA…SAEN).

It belongs to the MraZ family. Forms oligomers.

The protein resides in the cytoplasm. The protein localises to the nucleoid. This is Transcriptional regulator MraZ from Leuconostoc mesenteroides subsp. mesenteroides (strain ATCC 8293 / DSM 20343 / BCRC 11652 / CCM 1803 / JCM 6124 / NCDO 523 / NBRC 100496 / NCIMB 8023 / NCTC 12954 / NRRL B-1118 / 37Y).